Reading from the N-terminus, the 447-residue chain is Chorismate synthase, chloroplastic (447 aa).

A disordered region spans residues 1-24; sequence MASSLSTKPFLSGSRRRSTTDGSG. The transit peptide at 1–57 directs the protein to the chloroplast; sequence MASSLSTKPFLSGSRRRSTTDGSGWSYFQTSDLRQLSNQSVQISVRRQTAPLKLVVQ.

It belongs to the chorismate synthase family. In terms of assembly, homotetramer. It depends on FMNH2 as a cofactor. In terms of processing, the N-terminus is blocked.

The protein localises to the plastid. It is found in the chloroplast. It carries out the reaction 5-O-(1-carboxyvinyl)-3-phosphoshikimate = chorismate + phosphate. Its pathway is metabolic intermediate biosynthesis; chorismate biosynthesis; chorismate from D-erythrose 4-phosphate and phosphoenolpyruvate: step 7/7. Functionally, catalyzes the last common step of the biosynthesis of aromatic amino acids, produced via the shikimic acid pathway. The chain is Chorismate synthase, chloroplastic from Capnoides sempervirens (Rock-harlequin).